Here is a 426-residue protein sequence, read N- to C-terminus: uncharacterized protein (426 aa).

The N-terminal stretch at 1-23 (MKKFILFLIILLFSIYFLNVSSA) is a signal peptide.

This is an uncharacterized protein from Methanocaldococcus jannaschii (strain ATCC 43067 / DSM 2661 / JAL-1 / JCM 10045 / NBRC 100440) (Methanococcus jannaschii).